The primary structure comprises 320 residues: Dipeptide transport system permease protein DppC (320 aa).

6 helical membrane passes run 56–76, 121–141, 154–176, 230–252, 267–287, and 289–309; these read LAMA…IGPF, LFVG…YGGV, MRII…MVLM, LLPN…AIFA, FASW…GHWW, and LFFP…LGDG. An ABC transmembrane type-1 domain is found at 117-307; the sequence is ARISLFVGVM…LTMYAFNVLG (191 aa).

The protein belongs to the binding-protein-dependent transport system permease family. OppBC subfamily.

It is found in the cell membrane. Probably part of the ABC transporter DppBCDE involved in dipeptide transport. Responsible for the translocation of the substrate across the membrane. This is Dipeptide transport system permease protein DppC (dppC) from Bacillus subtilis (strain 168).